The following is a 236-amino-acid chain: CDP-diacylglycerol--glycerol-3-phosphate 3-phosphatidyltransferase (236 aa).

Helical transmembrane passes span 39–59 (IFIA…GVLA), 66–86 (ISIS…TAVI), 120–140 (VLIA…VFIV), 163–183 (WLGK…CFVW), and 196–216 (GLFF…FSIW).

It belongs to the CDP-alcohol phosphatidyltransferase class-I family.

The protein resides in the cell membrane. It catalyses the reaction a CDP-1,2-diacyl-sn-glycerol + sn-glycerol 3-phosphate = a 1,2-diacyl-sn-glycero-3-phospho-(1'-sn-glycero-3'-phosphate) + CMP + H(+). It participates in phospholipid metabolism; phosphatidylglycerol biosynthesis; phosphatidylglycerol from CDP-diacylglycerol: step 1/2. Its function is as follows. This protein catalyzes the committed step to the synthesis of the acidic phospholipids. The polypeptide is CDP-diacylglycerol--glycerol-3-phosphate 3-phosphatidyltransferase (pgsA) (Mycoplasma genitalium (strain ATCC 33530 / DSM 19775 / NCTC 10195 / G37) (Mycoplasmoides genitalium)).